The chain runs to 594 residues: MDVRRRPVKSLSSAKTATAGEPPKSQQQHPKASDALPLPLYLTNGLFFTMFFSVMYFLLHRWREKIRNSTPLHVVTLSELAALVLLMASVIYLLGFFGIGFVRSVIRPSPDAWDILEDDNAINEEDSRREPCAEAIDCSLPPKPKIVHMVPQKALNPKSAFADMMVEQPALAIAPLTEEDEEIVKSVVTGKIPSYSLESKLGDCKKAASIRREALQRITGKSLAGLPLDGFDYKSILGQCCEMPVGYVQIPVGIAGPLLLNETEYSVPMATTEGCLVASTNRGCKAIYASGGATSVLLRDGMTRAPVVRFSTVKRAAELKFFLEEPLNYDTPAHVFNKSSRFGRLQGIKCAVAGKNLYIRFTCSTGDAMGMNMVSKGVQNVLDFLQSDFPDMDVMGISGNYCSDKKPAAVNWIEGCGKSVVCEAIIKEEVVKKVLKTNVAALVELNMLKNLAGSAVAGALGGFNAHASNIVSAVYISTGQDPAQNVESSHCITMMEAVNNGKDLHISVTMPSIEVGTVGGGTQLASQSACLNLLGVKGASKESPGSNSRLLASIVAGSVLAGELSLMSALAAGQLVKSHMKYNRSSKDITKLSS.

Residues 1–32 (MDVRRRPVKSLSSAKTATAGEPPKSQQQHPKA) are disordered. The Lumenal portion of the chain corresponds to 1–37 (MDVRRRPVKSLSSAKTATAGEPPKSQQQHPKASDALP). A helical membrane pass occupies residues 38–58 (LPLYLTNGLFFTMFFSVMYFL). At 59 to 81 (LHRWREKIRNSTPLHVVTLSELA) the chain is on the cytoplasmic side. Residues 82 to 102 (ALVLLMASVIYLLGFFGIGFV) form a helical membrane-spanning segment. The Lumenal portion of the chain corresponds to 103-549 (RSVIRPSPDA…SKESPGSNSR (447 aa)). Asn261 carries an N-linked (GlcNAc...) asparagine glycan. The Charge relay system role is filled by Glu273. N-linked (GlcNAc...) asparagine glycosylation is present at Asn337. Active-site charge relay system residues include Lys405 and Asp481. The helical transmembrane segment at 550 to 570 (LLASIVAGSVLAGELSLMSAL) threads the bilayer. Topologically, residues 571 to 594 (AAGQLVKSHMKYNRSSKDITKLSS) are cytoplasmic. His579 acts as the Proton donor in catalysis.

Belongs to the HMG-CoA reductase family. Mostly expressed in the petioles of seedlings, seedlings and roots, and, to a lower extent, in seeds, leaves, stems and flowers.

The protein resides in the endoplasmic reticulum membrane. The protein localises to the plastid. It is found in the chloroplast membrane. Its subcellular location is the peroxisome membrane. The catalysed reaction is (R)-mevalonate + 2 NADP(+) + CoA = (3S)-3-hydroxy-3-methylglutaryl-CoA + 2 NADPH + 2 H(+). It participates in metabolic intermediate biosynthesis; (R)-mevalonate biosynthesis; (R)-mevalonate from acetyl-CoA: step 3/3. Its activity is regulated as follows. Competitive inhibition by mevinolin (Mev) is leading to a significant reduction of total ginsenoside in adventitious roots. Triggered by darkness. Functionally, catalyzes the synthesis of mevalonate, the specific precursor of all isoprenoid compounds present in plants. Component of the triterpene saponins (e.g. ginsenosides or panaxosides) and phytosterols biosynthetic pathways. The chain is 3-hydroxy-3-methylglutaryl coenzyme A reductase 2-A from Panax ginseng (Korean ginseng).